Consider the following 489-residue polypeptide: 2-(3-amino-3-carboxypropyl)histidine synthase subunit 2 (489 aa).

The residue at position 1 (methionine 1) is an N-acetylmethionine. Serine 7 carries the phosphoserine modification. [4Fe-4S] cluster is bound by residues cysteine 89, cysteine 110, and cysteine 341. Threonine 435 carries the post-translational modification Phosphothreonine. Residues serine 446 and serine 456 each carry the phosphoserine modification. The residue at position 467 (threonine 467) is a Phosphothreonine. Serine 488 carries the post-translational modification Phosphoserine.

The protein belongs to the DPH1/DPH2 family. DPH2 subfamily. Component of the 2-(3-amino-3-carboxypropyl)histidine synthase complex composed of DPH1, DPH2, DPH3 and a NADH-dependent reductase. Interacts with DPH1. [4Fe-4S] cluster serves as cofactor. Strongly expressed in skeletal muscle. Moderately expressed in heart, small intestine, liver, pancreas, testis and colon. Weakly expressed in brain, placenta, kidney, spleen, thymus, prostate, ovary and lymphocytes.

It functions in the pathway protein modification; peptidyl-diphthamide biosynthesis. Required for the first step of diphthamide biosynthesis, a post-translational modification of histidine which occurs in elongation factor 2. DPH1 and DPH2 transfer a 3-amino-3-carboxypropyl (ACP) group from S-adenosyl-L-methionine (SAM) to a histidine residue, the reaction is assisted by a reduction system comprising DPH3 and a NADH-dependent reductase. Facilitates the reduction of the catalytic iron-sulfur cluster found in the DPH1 subunit. The polypeptide is 2-(3-amino-3-carboxypropyl)histidine synthase subunit 2 (DPH2) (Homo sapiens (Human)).